The sequence spans 206 residues: Xanthine phosphoribosyltransferase (206 aa).

The xanthine site is built by L28 and N35. A 5-phospho-alpha-D-ribose 1-diphosphate-binding site is contributed by 136–140 (ANGQA). K164 provides a ligand contact to xanthine.

It belongs to the purine/pyrimidine phosphoribosyltransferase family. Xpt subfamily. In terms of assembly, homodimer.

Its subcellular location is the cytoplasm. It carries out the reaction XMP + diphosphate = xanthine + 5-phospho-alpha-D-ribose 1-diphosphate. It functions in the pathway purine metabolism; XMP biosynthesis via salvage pathway; XMP from xanthine: step 1/1. In terms of biological role, converts the preformed base xanthine, a product of nucleic acid breakdown, to xanthosine 5'-monophosphate (XMP), so it can be reused for RNA or DNA synthesis. The sequence is that of Xanthine phosphoribosyltransferase from Oenococcus oeni (strain ATCC BAA-331 / PSU-1).